Here is a 267-residue protein sequence, read N- to C-terminus: Probable 3-methyl-2-oxobutanoate hydroxymethyltransferase (267 aa).

The protein belongs to the PanB family.

It carries out the reaction 3-methyl-2-oxobutanoate + (6R)-5,10-methylene-5,6,7,8-tetrahydrofolate + H2O = 2-dehydropantoate + (6S)-5,6,7,8-tetrahydrofolate. It participates in cofactor biosynthesis; (R)-pantothenate biosynthesis; (R)-pantoate from 3-methyl-2-oxobutanoate: step 1/2. This chain is Probable 3-methyl-2-oxobutanoate hydroxymethyltransferase, found in Schizosaccharomyces pombe (strain 972 / ATCC 24843) (Fission yeast).